A 380-amino-acid polypeptide reads, in one-letter code: Coiled-coil domain-containing protein 74B (380 aa).

3 disordered regions span residues 1–51 (MSGA…KRNL), 89–108 (LIMNQTSQKKDGPSGNHLSR), and 128–202 (GGPS…DVPQ). Residues 34–44 (LRPQSPQLRQS) are compositionally biased toward polar residues. Residues 47 to 93 (QKRNLDLEKSLQFLQQQHSEMLAKLHEEIEHLKRENKDLRYKLIMNQ) adopt a coiled-coil conformation. The segment covering 141-151 (RTHRPGGKHGR) has biased composition (basic residues). Residues 165–182 (DSLSTSSFQSVKSISNSG) show a composition bias toward polar residues.

In Homo sapiens (Human), this protein is Coiled-coil domain-containing protein 74B (CCDC74B).